A 451-amino-acid polypeptide reads, in one-letter code: Ubiquinone biosynthesis monooxygenase COQ6, mitochondrial (451 aa).

Belongs to the UbiH/COQ6 family. As to quaternary structure, component of a multi-subunit COQ enzyme complex. Requires FAD as cofactor.

The protein localises to the mitochondrion inner membrane. The enzyme catalyses a 4-hydroxy-3-(all-trans-polyprenyl)benzoate + 2 reduced [2Fe-2S]-[ferredoxin] + O2 + 2 H(+) = a 3,4-dihydroxy-5-(all-trans-polyprenyl)benzoate + 2 oxidized [2Fe-2S]-[ferredoxin] + H2O. It carries out the reaction a 2-methoxy-6-(all-trans-polyprenyl)phenol + 2 reduced [2Fe-2S]-[ferredoxin] + O2 + 2 H(+) = a 2-methoxy-6-(all-trans-polyprenyl)benzene-1,4-diol + 2 oxidized [2Fe-2S]-[ferredoxin] + H2O. The protein operates within cofactor biosynthesis; ubiquinone biosynthesis. FAD-dependent monooxygenase required for two non-consecutive steps during ubiquinone biosynthesis. Required for the C5-ring hydroxylation during ubiquinone biosynthesis by catalyzing the hydroxylation of 4-hydroxy-3-(all-trans-polyprenyl)benzoic acid to 3,4-dihydroxy-5-(all-trans-polyprenyl)benzoic acid. Also acts downstream of coq4, for the C1-hydroxylation during ubiquinone biosynthesis by catalyzing the hydroxylation of 2-methoxy-6-(all-trans-polyprenyl)phenol to 2-methoxy-6-(all-trans-polyprenyl)benzene-1,4-diol. The electrons required for the hydroxylation reaction are funneled indirectly to coq-6 from NADPH via a ferredoxin/ferredoxin reductase system. In Caenorhabditis elegans, this protein is Ubiquinone biosynthesis monooxygenase COQ6, mitochondrial.